Here is a 1494-residue protein sequence, read N- to C-terminus: Ral GTPase-activating protein subunit beta (1494 aa).

Disordered stretches follow at residues P355–R437 and E709–E738. A Phosphoserine modification is found at S359. Residues T363 and T379 each carry the phosphothreonine modification. 3 stretches are compositionally biased toward polar residues: residues S369–P381, N392–E428, and N711–P735. Phosphoserine occurs at positions 421 and 720. At T734 the chain carries Phosphothreonine. Positions I1149–I1392 constitute a Rap-GAP domain. Position 1285 is a phosphoserine (S1285). The segment covering N1312–S1323 has biased composition (polar residues). A disordered region spans residues N1312 to P1335.

In terms of assembly, component of the heterodimeric RalGAP1 complex with RALGAPA1 and of the heterodimeric RalGAP2 complex with RALGAPA2. Heterodimerization is required for activity. As to expression, highly expressed in brain, mostly in amygdala.

Functionally, non-catalytic subunit of the heterodimeric RalGAP1 and RalGAP2 complexes which act as GTPase activators for the Ras-like small GTPases RALA and RALB. In Homo sapiens (Human), this protein is Ral GTPase-activating protein subunit beta (RALGAPB).